Here is a 298-residue protein sequence, read N- to C-terminus: MSTSIPDVAVHDSPAVAAPLRWVGMDGIVVPVQLTTADGGQHVIGRARAQIDLPAMEVKGIHMSRLYRLLDTHAVEPLTPVGICGLLSAMVNSHADCASTAARVDWHFDWLRRVPALVSNDLSGWRGYPVSLRAEYSAVHVQFWLCVEVGYSSTCPCSAALARQMLADAFLQEHVEVSALSPETVADWLRSNGSYATPHSQRSVARIEVALTEQAVELGLPALVDCAERILSTPVQAAVRRVDEQAFARLNGANLMYVEDATRRLQHGLAIHYSAFRVHVRHLESLHPHDAVASTVDE.

The protein belongs to the GTP cyclohydrolase IV family.

It catalyses the reaction GTP + H2O = 7,8-dihydroneopterin 3'-triphosphate + formate + H(+). Its pathway is cofactor biosynthesis; 7,8-dihydroneopterin triphosphate biosynthesis; 7,8-dihydroneopterin triphosphate from GTP: step 1/1. In terms of biological role, converts GTP to 7,8-dihydroneopterin triphosphate. The polypeptide is GTP cyclohydrolase FolE2 (Xylella fastidiosa (strain 9a5c)).